A 400-amino-acid polypeptide reads, in one-letter code: S-adenosylmethionine synthase (400 aa).

136–141 serves as a coordination point for ATP; that stretch reads GTGSTD.

The protein belongs to the AdoMet synthase 2 family. Mg(2+) serves as cofactor.

The catalysed reaction is L-methionine + ATP + H2O = S-adenosyl-L-methionine + phosphate + diphosphate. It functions in the pathway amino-acid biosynthesis; S-adenosyl-L-methionine biosynthesis; S-adenosyl-L-methionine from L-methionine: step 1/1. Catalyzes the formation of S-adenosylmethionine from methionine and ATP. In Methanoregula boonei (strain DSM 21154 / JCM 14090 / 6A8), this protein is S-adenosylmethionine synthase.